The primary structure comprises 117 residues: G antigen 13 (117 aa).

The tract at residues 1–117 is disordered; that stretch reads MSWRGRSTYY…PEEGEKQSQC (117 aa). Composition is skewed to acidic residues over residues 32 to 45 and 87 to 96; these read FSDE…EEGE and ECEDGPDGQE. Over residues 103–117 the composition is skewed to basic and acidic residues; that stretch reads EEVKTPEEGEKQSQC.

Belongs to the GAGE family.

This Homo sapiens (Human) protein is G antigen 13.